A 146-amino-acid chain; its full sequence is Anti-sigma F factor (146 aa).

The protein belongs to the anti-sigma-factor family.

The catalysed reaction is L-seryl-[protein] + ATP = O-phospho-L-seryl-[protein] + ADP + H(+). It catalyses the reaction L-threonyl-[protein] + ATP = O-phospho-L-threonyl-[protein] + ADP + H(+). In terms of biological role, binds to sigma F and blocks its ability to form an RNA polymerase holoenzyme (E-sigma F). Phosphorylates SpoIIAA on a serine residue. This phosphorylation may enable SpoIIAA to act as an anti-anti-sigma factor that counteracts SpoIIAB and thus releases sigma F from inhibition. This Geobacillus stearothermophilus (Bacillus stearothermophilus) protein is Anti-sigma F factor.